A 191-amino-acid polypeptide reads, in one-letter code: MATPNRLWMALLLLGVLGVLQTPAPAQAALQPNFEEDKFLGRWFTSGLASNSSWFLEKKKVLSMCKSVVAPAADGGLNLTSTFLRKDQCETRTLLLRPAGPPGCYSYTSPHWSSTHEVSVAETDYETYALLYTEGVRGPGQDFRMATLYSRSQNPRAEVKEHFTTFAKSLGFTEEGIVFLPKTDKCMEEHP.

An N-terminal signal peptide occupies residues 1–28 (MATPNRLWMALLLLGVLGVLQTPAPAQA). Asparagine 51 carries N-linked (GlcNAc...) asparagine glycosylation. Cysteine 65 serves as the catalytic Nucleophile. N-linked (GlcNAc...) asparagine glycosylation occurs at asparagine 78. A disulfide bridge connects residues cysteine 89 and cysteine 186.

It belongs to the calycin superfamily. Lipocalin family. As to quaternary structure, monomer. In the male reproductive system, expressed in the testis, epididymis and prostate, and secreted into the seminal fluid.

The protein localises to the rough endoplasmic reticulum. Its subcellular location is the nucleus membrane. It localises to the golgi apparatus. It is found in the cytoplasm. The protein resides in the perinuclear region. The protein localises to the secreted. The catalysed reaction is prostaglandin H2 = prostaglandin D2. In terms of biological role, catalyzes the conversion of PGH2 to PGD2, a prostaglandin involved in smooth muscle contraction/relaxation and a potent inhibitor of platelet aggregation. Involved in a variety of CNS functions, such as sedation, NREM sleep and PGE2-induced allodynia, and may have an anti-apoptotic role in oligodendrocytes. Binds small non-substrate lipophilic molecules, including biliverdin, bilirubin, retinal, retinoic acid and thyroid hormone, and may act as a scavenger for harmful hydrophobic molecules and as a secretory retinoid and thyroid hormone transporter. Possibly involved in development and maintenance of the blood-brain, blood-retina, blood-aqueous humor and blood-testis barrier. It is likely to play important roles in both maturation and maintenance of the central nervous system and male reproductive system. Involved in PLA2G3-dependent maturation of mast cells. PLA2G3 is secreted by immature mast cells and acts on nearby fibroblasts upstream to PTDGS to synthesize PGD2, which in turn promotes mast cell maturation and degranulation via PTGDR. The protein is Prostaglandin-H2 D-isomerase (PTGDS) of Bos taurus (Bovine).